A 310-amino-acid polypeptide reads, in one-letter code: Olfactory receptor 5P54 (310 aa).

Topologically, residues 1–25 are extracellular; sequence MNGGNHTSMTELFILGPTEDPTFCI. N-linked (GlcNAc...) asparagine glycosylation is present at asparagine 5. A helical transmembrane segment spans residues 26 to 46; it reads AFFVIFLGVYMVTLVGNISII. Residues 47-54 are Cytoplasmic-facing; the sequence is TLIRISSQ. Residues 55-75 form a helical membrane-spanning segment; that stretch reads LHTPVYLFLNHLAFVDILYST. The Extracellular portion of the chain corresponds to 76 to 99; that stretch reads LVSVIMLMELLEHELALPVAACAA. The cysteines at positions 97 and 189 are disulfide-linked. A helical membrane pass occupies residues 100 to 120; it reads ELCITVLFGSSECFLLAAMAY. At 121–133 the chain is on the cytoplasmic side; sequence DCYVAICSPLLYS. A helical membrane pass occupies residues 134–154; the sequence is TLMSSRVCFLLLGMSYVGGCM. Residues 155-196 are Extracellular-facing; it reads NGWIFTGCLLNLSFYGPYQIDHFFCDFSPLLKLSCSDVSIIG. Asparagine 165 is a glycosylation site (N-linked (GlcNAc...) asparagine). The helical transmembrane segment at 197–217 threads the bilayer; sequence IIPSISSGSIIVVTVLVIAVF. The Cytoplasmic segment spans residues 218-237; that stretch reads YICILMTILKMHSTDGCHKA. A helical transmembrane segment spans residues 238–258; it reads FSTCNSYLTAVTLYYGTITFI. The Extracellular segment spans residues 259-271; the sequence is YVMPKSNYSTEKN. N-linked (GlcNAc...) asparagine glycosylation occurs at asparagine 265. A helical membrane pass occupies residues 272 to 292; the sequence is KVLSEFYTVVIPMLNHLIYSL. Residues 293 to 310 lie on the Cytoplasmic side of the membrane; it reads KNRDVKDALRKAIVRVYT.

The protein belongs to the G-protein coupled receptor 1 family.

Its subcellular location is the cell membrane. In terms of biological role, potential odorant receptor. The chain is Olfactory receptor 5P54 from Mus musculus (Mouse).